A 545-amino-acid polypeptide reads, in one-letter code: Cannabidiolic acid synthase-like 1 (545 aa).

The N-terminal stretch at Met-1–Ala-28 is a signal peptide. A disulfide bridge links Cys-37 with Cys-99. N-linked (GlcNAc...) asparagine glycosylation is found at Asn-45, Asn-65, Asn-89, and Asn-168. An FAD-binding PCMH-type domain is found at Thr-77–Val-251. The segment at residues His-114–Cys-176 is a cross-link (6-(S-cysteinyl)-8alpha-(pros-histidyl)-FAD (His-Cys)). Residue His-292 coordinates substrate. N-linked (GlcNAc...) asparagine glycosylation is found at Asn-297, Asn-305, Asn-329, and Asn-361. A substrate-binding site is contributed by Tyr-417. N-linked (GlcNAc...) asparagine glycosylation is present at Asn-467. Tyr-484 serves as the catalytic Proton acceptor. Asn-499 is a glycosylation site (N-linked (GlcNAc...) asparagine).

It belongs to the oxygen-dependent FAD-linked oxidoreductase family. The cofactor is FAD. In terms of processing, the FAD cofactor is bound via a bicovalent 6-S-cysteinyl, 8alpha-N1-histidyl FAD linkage.

The protein resides in the secreted. Has no cannabidiolic acid synthase activity. The protein is Cannabidiolic acid synthase-like 1 (CBDAS2) of Cannabis sativa (Hemp).